The sequence spans 132 residues: Small ribosomal subunit protein uS8 (132 aa).

It belongs to the universal ribosomal protein uS8 family. In terms of assembly, part of the 30S ribosomal subunit. Contacts proteins S5 and S12.

Its function is as follows. One of the primary rRNA binding proteins, it binds directly to 16S rRNA central domain where it helps coordinate assembly of the platform of the 30S subunit. The sequence is that of Small ribosomal subunit protein uS8 from Bifidobacterium longum (strain NCC 2705).